Reading from the N-terminus, the 273-residue chain is Thiazole synthase (273 aa).

Catalysis depends on Lys-111, which acts as the Schiff-base intermediate with DXP. 1-deoxy-D-xylulose 5-phosphate-binding positions include Gly-172, 198 to 199 (AG), and 220 to 221 (NS). A disordered region spans residues 251-273 (RLPRRGQASASSPTTGLISGKDK). Residues 258 to 267 (ASASSPTTGL) are compositionally biased toward polar residues.

It belongs to the ThiG family. Homotetramer. Forms heterodimers with either ThiH or ThiS.

The protein resides in the cytoplasm. It catalyses the reaction [ThiS sulfur-carrier protein]-C-terminal-Gly-aminoethanethioate + 2-iminoacetate + 1-deoxy-D-xylulose 5-phosphate = [ThiS sulfur-carrier protein]-C-terminal Gly-Gly + 2-[(2R,5Z)-2-carboxy-4-methylthiazol-5(2H)-ylidene]ethyl phosphate + 2 H2O + H(+). It participates in cofactor biosynthesis; thiamine diphosphate biosynthesis. Catalyzes the rearrangement of 1-deoxy-D-xylulose 5-phosphate (DXP) to produce the thiazole phosphate moiety of thiamine. Sulfur is provided by the thiocarboxylate moiety of the carrier protein ThiS. In vitro, sulfur can be provided by H(2)S. The protein is Thiazole synthase of Synechococcus sp. (strain CC9902).